Reading from the N-terminus, the 513-residue chain is Noroxomaritidine synthase (513 aa).

The chain crosses the membrane as a helical span at residues 14-34 (HYPEILIAIACFLIFSLLLSA). A heme-binding site is contributed by Cys458.

It belongs to the cytochrome P450 family. Heme is required as a cofactor.

It is found in the membrane. It catalyses the reaction 4'-O-methylnorbelladine + reduced [NADPH--hemoprotein reductase] + O2 = (10bS,4aR)-noroxomaritidine + oxidized [NADPH--hemoprotein reductase] + 2 H2O + H(+). The catalysed reaction is 4'-O-methylnorbelladine + reduced [NADPH--hemoprotein reductase] + O2 = (10bR,4aS)-noroxomaritidine + oxidized [NADPH--hemoprotein reductase] + 2 H2O + H(+). It participates in alkaloid biosynthesis. In terms of biological role, cytochrome P450 that catalyzes an intramolecular para-para' C-C phenol coupling of 4'-O-methylnorbelladine in alkaloids biosynthesis, including haemanthamine- and crinamine-type alkaloids, promising anticancer agents. Catalyzes the formation of (10bR,4aS)-noroxomaritidine and (10bS,4aR)-noroxomaritidine from 4'-O-methylnorbelladine. Also produces N-demethylnarwedine as a minor product. Involved in the biosynthesis of haemanthamine. Can also use 4'-O-methyl-N-methylnorbelladine, (S)- and (R)-coclaurine as substrates, but not 3'-O-methylnorbelladine, 3',4'-O-dimethylnorbelladine, norbelladine, haemanthamine, (10bS,4aR)- or (10bR,4aS)-noroxomaritidine, isovanillin or tyramine. In Narcissus aff. pseudonarcissus MK-2014 (Daffodil), this protein is Noroxomaritidine synthase.